Reading from the N-terminus, the 225-residue chain is NAD(P)H-quinone oxidoreductase subunit K, chloroplastic (225 aa).

[4Fe-4S] cluster is bound by residues cysteine 43, cysteine 44, cysteine 108, and cysteine 139.

This sequence belongs to the complex I 20 kDa subunit family. In terms of assembly, NDH is composed of at least 16 different subunits, 5 of which are encoded in the nucleus. The cofactor is [4Fe-4S] cluster.

It is found in the plastid. The protein resides in the chloroplast thylakoid membrane. It carries out the reaction a plastoquinone + NADH + (n+1) H(+)(in) = a plastoquinol + NAD(+) + n H(+)(out). The enzyme catalyses a plastoquinone + NADPH + (n+1) H(+)(in) = a plastoquinol + NADP(+) + n H(+)(out). Its function is as follows. NDH shuttles electrons from NAD(P)H:plastoquinone, via FMN and iron-sulfur (Fe-S) centers, to quinones in the photosynthetic chain and possibly in a chloroplast respiratory chain. The immediate electron acceptor for the enzyme in this species is believed to be plastoquinone. Couples the redox reaction to proton translocation, and thus conserves the redox energy in a proton gradient. This chain is NAD(P)H-quinone oxidoreductase subunit K, chloroplastic, found in Nicotiana tabacum (Common tobacco).